Consider the following 448-residue polypeptide: MRKTHINVIGAGLAGSEAAYQIAKRGIPVKIYEMRGLKQTPQHKTEKFAELVCSNSLRGAAITNAVGLLKEEMRRLDSVIIKAAEYTQVPAGGALAVDREGFSDFVTREVSNHPLVEVIREEITDIPQDELTIIATGPLTSDSLANKIREFNGADGFYFYDAAAPIIDANSINFDKVYKKSRYDKGEADYINCPMTKEEFQAFQEALISAEEAPLNSFEDLKVFEGCMPIEEMAKRGYKTMLFGPMKPVGLEYPYEYKGPRDGEFRTPYAVVQLRQDNASASLYNIVGFQTHLKWGEQKRVFQMIPGLENAEFVRYGVMHRNSYMDSPNLLKQTFQSRKQENLFFAGQMTGVEGYVESAASGLVAGINAAKLFNDEEVVIFPKTTAIGSLPYYITHTDSKHFQPMNVTFGIVEELDGPRIRDKKERYTKVAERSLNTLTDIISKENLA.

10 to 15 (GAGLAG) provides a ligand contact to FAD.

It belongs to the MnmG family. TrmFO subfamily. FAD is required as a cofactor.

The protein localises to the cytoplasm. The catalysed reaction is uridine(54) in tRNA + (6R)-5,10-methylene-5,6,7,8-tetrahydrofolate + NADH + H(+) = 5-methyluridine(54) in tRNA + (6S)-5,6,7,8-tetrahydrofolate + NAD(+). It catalyses the reaction uridine(54) in tRNA + (6R)-5,10-methylene-5,6,7,8-tetrahydrofolate + NADPH + H(+) = 5-methyluridine(54) in tRNA + (6S)-5,6,7,8-tetrahydrofolate + NADP(+). In terms of biological role, catalyzes the folate-dependent formation of 5-methyl-uridine at position 54 (M-5-U54) in all tRNAs. The protein is Methylenetetrahydrofolate--tRNA-(uracil-5-)-methyltransferase TrmFO of Lactococcus lactis subsp. cremoris (strain SK11).